The sequence spans 477 residues: Stromelysin-1 (477 aa).

The first 17 residues, 1 to 17 (MKNLPILLLLCVAACSA), serve as a signal peptide directing secretion. A propeptide spans 18 to 99 (YPLDRSARDE…SRCGVPDVGH (82 aa)) (activation peptide). The Cysteine switch signature appears at 90–97 (SRCGVPDV). C92 contributes to the Zn(2+) binding site. A glycan (N-linked (GlcNAc...) asparagine) is linked at N120. Positions 124 and 158 each coordinate Ca(2+). The Zn(2+) site is built by H168 and D170. Residues D175, G176, G178, and V180 each coordinate Ca(2+). H183 is a Zn(2+) binding site. The Ca(2+) site is built by G190, N192, and D194. H196 contacts Zn(2+). Positions 198, 199, and 201 each coordinate Ca(2+). Residue H218 participates in Zn(2+) binding. The active site involves E219. Residues H222 and H228 each coordinate Zn(2+). Residues 260 to 285 (QSLYGPPPASPDSPVEPSEPEPPAPG) are disordered. Hemopexin repeat units follow at residues 287–336 (LAMC…WPSL), 337–383 (PSGI…GFPP), 385–433 (VRKI…FPGI), and 434–477 (DSKL…WFNC). An intrachain disulfide couples C290 to C477. A Ca(2+)-binding site is contributed by D297. Ca(2+) is bound by residues D389 and D438.

It belongs to the peptidase M10A family. The cofactor is Ca(2+). Zn(2+) is required as a cofactor.

It is found in the secreted. The protein resides in the extracellular space. Its subcellular location is the extracellular matrix. It carries out the reaction Preferential cleavage where P1', P2' and P3' are hydrophobic residues.. Metalloproteinase with a rather broad substrate specificity that can degrade fibronectin, laminin, gelatins of type I, III, IV, and V; collagens III, IV, X, and IX, and cartilage proteoglycans. Activates different molecules including growth factors, plasminogen or other matrix metalloproteinases such as MMP9. Once released into the extracellular matrix (ECM), the inactive pro-enzyme is activated by the plasmin cascade signaling pathway. Also acts intracellularly. For example, in dopaminergic neurons, gets activated by the serine protease HTRA2 upon stress and plays a pivotal role in DA neuronal degeneration by mediating microglial activation and alpha-synuclein/SNCA cleavage. In addition, plays a role in immune response and possesses antiviral activity against various viruses. Mechanistically, translocates from the cytoplasm into the cell nucleus upon virus infection to influence NF-kappa-B activities. The sequence is that of Stromelysin-1 (MMP3) from Equus caballus (Horse).